The sequence spans 412 residues: Esterase EstD (412 aa).

Positions 1–20 (MRLTVFLSLFLGVMVFGAFD) are cleaved as a signal peptide. Residue Ser243 is the Nucleophile of the active site. Catalysis depends on charge relay system residues Asp347 and His378.

Belongs to the AB hydrolase superfamily. Esterase 10 family. As to quaternary structure, exists mainly as a monomer and, to some extent as a dimer.

It catalyses the reaction a carboxylic ester + H2O = an alcohol + a carboxylate + H(+). Is strongly inhibited by phenylmethylsulfonyl fluoride, a serine protease inhibitor, and by mercury chloride. Diethyl pyrocarbonate, a histidine modifier, also inhibits the reaction, albeit less pronounced than phenylmethylsulfonyl fluoride. EDTA and dithiothreitol have no effect on enzyme activity. Exhibits significant esterase activity with a preference for short acyl chain esters (C4-C8) in vitro. Its physiological function is not known. Displays neither proteolytic activity using casein as substrate, nor peptidase activity when assayed with L-leucine p-nitroanilide and L-proline p-nitroanilide. The chain is Esterase EstD from Thermotoga maritima (strain ATCC 43589 / DSM 3109 / JCM 10099 / NBRC 100826 / MSB8).